The chain runs to 156 residues: Cytochrome c-type biogenesis protein CcmE 1 (156 aa).

At methionine 1–arginine 8 the chain is on the cytoplasmic side. A helical; Signal-anchor for type II membrane protein membrane pass occupies residues leucine 9–alanine 29. Over leucine 30–arginine 156 the chain is Periplasmic. Heme contacts are provided by histidine 123 and tyrosine 127.

Belongs to the CcmE/CycJ family.

It localises to the cell inner membrane. Functionally, heme chaperone required for the biogenesis of c-type cytochromes. Transiently binds heme delivered by CcmC and transfers the heme to apo-cytochromes in a process facilitated by CcmF and CcmH. The chain is Cytochrome c-type biogenesis protein CcmE 1 from Xanthomonas oryzae pv. oryzae (strain MAFF 311018).